The sequence spans 202 residues: LexA repressor (202 aa).

The segment at residues 28–48 is a DNA-binding region (H-T-H motif); the sequence is RAEIAMRLGFRSPNAAEEHLK. Residues S119 and K156 each act as for autocatalytic cleavage activity in the active site.

This sequence belongs to the peptidase S24 family. In terms of assembly, homodimer.

It carries out the reaction Hydrolysis of Ala-|-Gly bond in repressor LexA.. Represses a number of genes involved in the response to DNA damage (SOS response), including recA and lexA. Binds to the 16 bp palindromic sequence 5'-CTGTATATATATACAG-3'. In the presence of single-stranded DNA, RecA interacts with LexA causing an autocatalytic cleavage which disrupts the DNA-binding part of LexA, leading to derepression of the SOS regulon and eventually DNA repair. This is LexA repressor from Serratia proteamaculans (strain 568).